A 123-amino-acid chain; its full sequence is SOSS complex subunit C homolog (123 aa).

It belongs to the SOSS-C family.

This Drosophila ananassae (Fruit fly) protein is SOSS complex subunit C homolog.